Consider the following 1318-residue polypeptide: DNA-directed RNA polymerase subunit beta' (1318 aa).

Cysteine 60, cysteine 62, cysteine 75, and cysteine 78 together coordinate Zn(2+). Mg(2+) is bound by residues aspartate 535, aspartate 537, and aspartate 539. The Zn(2+) site is built by cysteine 890, cysteine 967, cysteine 974, and cysteine 977.

It belongs to the RNA polymerase beta' chain family. As to quaternary structure, the RNAP catalytic core consists of 2 alpha, 1 beta, 1 beta' and 1 omega subunit. When a sigma factor is associated with the core the holoenzyme is formed, which can initiate transcription. It depends on Mg(2+) as a cofactor. Requires Zn(2+) as cofactor.

The enzyme catalyses RNA(n) + a ribonucleoside 5'-triphosphate = RNA(n+1) + diphosphate. DNA-dependent RNA polymerase catalyzes the transcription of DNA into RNA using the four ribonucleoside triphosphates as substrates. This chain is DNA-directed RNA polymerase subunit beta', found in Rhodococcus erythropolis (strain PR4 / NBRC 100887).